A 78-amino-acid chain; its full sequence is U29-theraphotoxin-Cg1a (78 aa).

Residues 1 to 19 form the signal peptide; it reads MRYQTVFWILLIALCTVNP. Intrachain disulfides connect Cys-42–Cys-56, Cys-49–Cys-60, Cys-55–Cys-77, and Cys-67–Cys-73.

This sequence belongs to the neurotoxin 13 (insecticidal toxin ABC) family. 03 (JZTX-59) subfamily. Expressed by the venom gland.

It is found in the secreted. Probable ion channel inhibitor. The protein is U29-theraphotoxin-Cg1a of Chilobrachys guangxiensis (Chinese earth tiger tarantula).